A 396-amino-acid polypeptide reads, in one-letter code: Acetylornithine aminotransferase 2 (396 aa).

Pyridoxal 5'-phosphate contacts are provided by residues 102–103 (GA) and F134. Residue R137 coordinates N(2)-acetyl-L-ornithine. 219 to 222 (DEVQ) contacts pyridoxal 5'-phosphate. N6-(pyridoxal phosphate)lysine is present on K248. A pyridoxal 5'-phosphate-binding site is contributed by T276.

It belongs to the class-III pyridoxal-phosphate-dependent aminotransferase family. ArgD subfamily. Homodimer. Pyridoxal 5'-phosphate is required as a cofactor.

It localises to the cytoplasm. The enzyme catalyses N(2)-acetyl-L-ornithine + 2-oxoglutarate = N-acetyl-L-glutamate 5-semialdehyde + L-glutamate. Its pathway is amino-acid biosynthesis; L-arginine biosynthesis; N(2)-acetyl-L-ornithine from L-glutamate: step 4/4. The protein is Acetylornithine aminotransferase 2 of Bordetella pertussis (strain Tohama I / ATCC BAA-589 / NCTC 13251).